The following is a 565-amino-acid chain: Putative lipase ATG15 (565 aa).

Over methionine 1–arginine 21 the chain is Cytoplasmic. Residues isoleucine 22–valine 42 traverse the membrane as a helical; Signal-anchor for type II membrane protein segment. The Lumenal segment spans residues aspartate 43–isoleucine 565. Residue asparagine 217 is glycosylated (N-linked (GlcNAc...) asparagine). Catalysis depends on serine 347, which acts as the Charge relay system. The tract at residues lysine 488 to aspartate 538 is disordered. The segment covering glutamine 493–arginine 518 has biased composition (low complexity). Residues threonine 519–proline 528 show a composition bias toward basic and acidic residues.

The protein belongs to the AB hydrolase superfamily. Lipase family. In terms of assembly, binds to both phosphatidylinositol (PI) and phosphatidylinositol 3,5-bisphosphate (PIP2).

It is found in the endosome. It localises to the multivesicular body membrane. Its subcellular location is the prevacuolar compartment membrane. It catalyses the reaction a triacylglycerol + H2O = a diacylglycerol + a fatty acid + H(+). Lipase which is essential for lysis of subvacuolar cytoplasm to vacuole targeted bodies and intravacuolar autophagic bodies. Involved in the lysis of intravacuolar multivesicular body (MVB) vesicles. The intravacuolar membrane disintegration by ATG15 is critical to life span extension. The sequence is that of Putative lipase ATG15 (ATG15) from Vanderwaltozyma polyspora (strain ATCC 22028 / DSM 70294 / BCRC 21397 / CBS 2163 / NBRC 10782 / NRRL Y-8283 / UCD 57-17) (Kluyveromyces polysporus).